The chain runs to 572 residues: Hsp70-Hsp90 organizing protein 1 (572 aa).

TPR repeat units lie at residues 2–35, 37–69, and 70–103; these read AEEAKAKGNAAFSSGDFTTAINHFTEAIALAPTN, VLFSNRSAAHASLHQYAEALSDAKETIKLKPYW, and PKGYSRLGAAHLGLNQFELAVTAYKKGLDVDPTN. The region spanning 133–172 is the STI1 1 domain; sequence GPEMWTKLTSDPSTRGFLQQPDFVNMMQEIQKNPSSLNLY. Phosphoserine is present on Ser167. The tract at residues 189 to 248 is disordered; that stretch reads KFRPPPPQGDEAEVPESDMGQSSSNEPEVEKKREPEPEPEPEVTEEKEKKERKEKAKKEK. Positions 232–248 are enriched in basic and acidic residues; sequence TEEKEKKERKEKAKKEK. Positions 241-258 match the Bipartite nuclear localization signal motif; it reads KEKAKKEKELGNAAYKKK. 7 TPR repeats span residues 244–277, 279–311, 319–356, 358–382, 383–416, 418–450, and 451–484; these read AKKEKELGNAAYKKKDFETAIQHYSTAIEIDDED, SYLTNRAAVYLEMGKYNECIEDCNKAVERGREL, ARALTRKGTALTKMAKCSKDYEPAIEAFQKALTEHRNP, TLKRLNDAERAKKEWEQKQYFDPKL, GDEEREKGNDFFKEQKYPEAIKHYTEAIKRNPND, KAYSNRAASYTKLGAMPEGLKDAEKCIELDPTF, and SKGYSRKAAVQFFLKEYDNAMETYQAGLEHDPSN. The STI1 2 domain occupies 521-560; it reads DPEIQNILTDPVMRQVLSDLQENPSAAQKHMQNPMVMNKI.

In terms of assembly, co-chaperone that forms a complex with HSP70 and HSP90 and preproteins (e.g. chloroplast preproteins). Post-translationally, phosphorylated. Acetylated.

The protein localises to the cytoplasm. It localises to the nucleus. Mediates the association of the molecular chaperones HSP70 and HSP90. Mediates nuclear encoded chloroplast preproteins binding to HSP90 prior to chloroplastic sorting. The sequence is that of Hsp70-Hsp90 organizing protein 1 (HOP1) from Arabidopsis thaliana (Mouse-ear cress).